The chain runs to 440 residues: Ribosomal protein uS12 methylthiotransferase RimO (440 aa).

One can recognise an MTTase N-terminal domain in the interval 6-116 (PKVGFVSLGC…VVTAVHEVVP (111 aa)). The [4Fe-4S] cluster site is built by C15, C51, C80, C149, C153, and C156. The Radical SAM core domain maps to 135-373 (LTPRHYAYLK…MAHQQAISAA (239 aa)). In terms of domain architecture, TRAM spans 376–440 (QLKVGKEIEV…DEYDLWAELV (65 aa)).

It belongs to the methylthiotransferase family. RimO subfamily. [4Fe-4S] cluster is required as a cofactor.

It is found in the cytoplasm. It catalyses the reaction L-aspartate(89)-[ribosomal protein uS12]-hydrogen + (sulfur carrier)-SH + AH2 + 2 S-adenosyl-L-methionine = 3-methylsulfanyl-L-aspartate(89)-[ribosomal protein uS12]-hydrogen + (sulfur carrier)-H + 5'-deoxyadenosine + L-methionine + A + S-adenosyl-L-homocysteine + 2 H(+). Functionally, catalyzes the methylthiolation of an aspartic acid residue of ribosomal protein uS12. In Pseudomonas aeruginosa (strain UCBPP-PA14), this protein is Ribosomal protein uS12 methylthiotransferase RimO.